A 766-amino-acid chain; its full sequence is Probable serine/threonine-protein kinase KKQ8 (766 aa).

5 disordered regions span residues Met-1 to Ser-165, Gly-201 to Leu-240, Ser-277 to Pro-297, Thr-362 to Ser-384, and Ala-417 to Gln-437. Positions Arg-14–Leu-25 are enriched in low complexity. A compositionally biased stretch (basic and acidic residues) spans Val-49–Pro-64. Residues Leu-94 to Thr-120 show a composition bias toward polar residues. A compositionally biased stretch (basic and acidic residues) spans Glu-127–Arg-137. Polar residues-rich tracts occupy residues Arg-140–Ser-165 and Pro-214–Ser-223. Residues Ser-288 to Pro-297 show a composition bias toward basic and acidic residues. The span at Asp-372–Asp-382 shows a compositional bias: acidic residues. Residues Lys-419 to Thr-430 are compositionally biased toward basic residues. Residues Gly-449–Met-752 form the Protein kinase domain. ATP contacts are provided by residues Val-455–Val-463 and Lys-493. Asp-603 (proton acceptor) is an active-site residue.

It belongs to the protein kinase superfamily. CAMK Ser/Thr protein kinase family. NPR/HAL subfamily. HAL5 sub-subfamily.

The protein localises to the cytoplasm. The catalysed reaction is L-seryl-[protein] + ATP = O-phospho-L-seryl-[protein] + ADP + H(+). The enzyme catalyses L-threonyl-[protein] + ATP = O-phospho-L-threonyl-[protein] + ADP + H(+). This Candida glabrata (strain ATCC 2001 / BCRC 20586 / JCM 3761 / NBRC 0622 / NRRL Y-65 / CBS 138) (Yeast) protein is Probable serine/threonine-protein kinase KKQ8 (KKQ8).